Consider the following 180-residue polypeptide: Der GTPase-activating protein YihI (180 aa).

Disordered regions lie at residues 1–87 (MSRK…MTKQ) and 142–180 (GLLE…DYKG). A compositionally biased stretch (basic and acidic residues) spans 23–32 (NRTESDVEGR). The segment covering 33–43 (LRKRAKKRKGL) has biased composition (basic residues). Basic and acidic residues predominate over residues 51–68 (EVNEQKKQSSEQNRDPRL). Over residues 165 to 180 (DLLADFDDINFDDYKG) the composition is skewed to acidic residues.

It belongs to the YihI family. In terms of assembly, interacts with Der.

Functionally, a GTPase-activating protein (GAP) that modifies Der/EngA GTPase function. May play a role in ribosome biogenesis. The sequence is that of Der GTPase-activating protein YihI from Vibrio parahaemolyticus serotype O3:K6 (strain RIMD 2210633).